A 173-amino-acid chain; its full sequence is Large ribosomal subunit protein uL10 (173 aa).

It belongs to the universal ribosomal protein uL10 family. In terms of assembly, part of the ribosomal stalk of the 50S ribosomal subunit. The N-terminus interacts with L11 and the large rRNA to form the base of the stalk. The C-terminus forms an elongated spine to which L12 dimers bind in a sequential fashion forming a multimeric L10(L12)X complex.

Its function is as follows. Forms part of the ribosomal stalk, playing a central role in the interaction of the ribosome with GTP-bound translation factors. This chain is Large ribosomal subunit protein uL10, found in Cupriavidus necator (strain ATCC 17699 / DSM 428 / KCTC 22496 / NCIMB 10442 / H16 / Stanier 337) (Ralstonia eutropha).